The following is a 688-amino-acid chain: Phosphoinositide 3-phosphatase (688 aa).

The region spanning 155 to 637 (SWDIYDPIKE…KKVQWWWQLY (483 aa)) is the Myotubularin phosphatase domain. Residue Cys397 is the Phosphocysteine intermediate of the active site. Residues 647–668 (ELRHKRDSVPISVDKKSKEHSN) show a composition bias toward basic and acidic residues. A disordered region spans residues 647–672 (ELRHKRDSVPISVDKKSKEHSNSDGG).

The protein belongs to the protein-tyrosine phosphatase family. Non-receptor class myotubularin subfamily.

The protein resides in the cytoplasm. It carries out the reaction a 1,2-diacyl-sn-glycero-3-phospho-(1D-myo-inositol-3-phosphate) + H2O = a 1,2-diacyl-sn-glycero-3-phospho-(1D-myo-inositol) + phosphate. Lipid phosphatase which dephosphorylates phosphatidylinositol 3-monophosphate (PI3P). Involved in the control of PI3P-dependent signaling and in the maintenance of endosomal system integrity. The sequence is that of Phosphoinositide 3-phosphatase from Saccharomyces cerevisiae (strain ATCC 204508 / S288c) (Baker's yeast).